We begin with the raw amino-acid sequence, 359 residues long: Photosystem II protein D1 3 (359 aa).

Transmembrane regions (helical) follow at residues 29–46 (YVGWFGVLMIPTLLAATI), 118–133 (HFLIGIYAYMGREWEL), and 142–156 (WICVAYSAPVAAASA). H118 serves as a coordination point for chlorophyll a. Position 126 (Y126) interacts with pheophytin a. [CaMn4O5] cluster is bound by residues D170 and E189. The chain crosses the membrane as a helical span at residues 197–218 (FHMLGVAGVFGGSLFSAMHGSL). A chlorophyll a-binding site is contributed by H198. A quinone contacts are provided by residues H215 and 264–265 (SF). H215 lines the Fe cation pocket. Residue H272 coordinates Fe cation. A helical membrane pass occupies residues 274–288 (FLAAWPVVGIWFTAL). [CaMn4O5] cluster contacts are provided by H332, E333, D342, and A344. Residues 345 to 359 (AAESTPVALQVPAIG) constitute a propeptide that is removed on maturation.

The protein belongs to the reaction center PufL/M/PsbA/D family. As to quaternary structure, PSII is composed of 1 copy each of membrane proteins PsbA, PsbB, PsbC, PsbD, PsbE, PsbF, PsbH, PsbI, PsbJ, PsbK, PsbL, PsbM, PsbT, PsbX, PsbY, PsbZ, Psb30/Ycf12, peripheral proteins PsbO, CyanoQ (PsbQ), PsbU, PsbV and a large number of cofactors. It forms dimeric complexes. The cofactor is The D1/D2 heterodimer binds P680, chlorophylls that are the primary electron donor of PSII, and subsequent electron acceptors. It shares a non-heme iron and each subunit binds pheophytin, quinone, additional chlorophylls, carotenoids and lipids. D1 provides most of the ligands for the Mn4-Ca-O5 cluster of the oxygen-evolving complex (OEC). There is also a Cl(-1) ion associated with D1 and D2, which is required for oxygen evolution. The PSII complex binds additional chlorophylls, carotenoids and specific lipids.. In terms of processing, tyr-161 forms a radical intermediate that is referred to as redox-active TyrZ, YZ or Y-Z. C-terminally processed by CtpA; processing is essential to allow assembly of the oxygen-evolving complex and thus photosynthetic growth.

The protein localises to the cellular thylakoid membrane. It carries out the reaction 2 a plastoquinone + 4 hnu + 2 H2O = 2 a plastoquinol + O2. In terms of biological role, photosystem II (PSII) is a light-driven water:plastoquinone oxidoreductase that uses light energy to abstract electrons from H(2)O, generating O(2) and a proton gradient subsequently used for ATP formation. It consists of a core antenna complex that captures photons, and an electron transfer chain that converts photonic excitation into a charge separation. The D1/D2 (PsbA/PsbD) reaction center heterodimer binds P680, the primary electron donor of PSII as well as several subsequent electron acceptors. The chain is Photosystem II protein D1 3 from Parasynechococcus marenigrum (strain WH8102).